The primary structure comprises 145 residues: Meiotically up-regulated gene 124 protein (145 aa).

The next 2 helical transmembrane spans lie at 18-38 (IILTIINSLVYLVNFISCPSI) and 95-115 (FAWSCALPCFVDSFFPSNFFL).

The protein localises to the membrane. Has a role in meiosis. The chain is Meiotically up-regulated gene 124 protein (mug124) from Schizosaccharomyces pombe (strain 972 / ATCC 24843) (Fission yeast).